The chain runs to 509 residues: Poly(A) RNA polymerase GLD2-A (509 aa).

The interval 88-107 is disordered; it reads PGSPSSSFQNRKRRSDEGNV. Mg(2+)-binding residues include Asp-240 and Asp-242. Positions 409–462 constitute a PAP-associated domain; the sequence is LGDLLLGFLKYFAVEFDWSKDIISVREGKALPRSDDYLWRNKYICVEEPFDGTN.

The protein belongs to the DNA polymerase type-B-like family. GLD2 subfamily. Component of a complex at least composed of cpeb1, cpsf1, tent2/gld2, pabpc1/ePAB, parn and sympk. Following oocyte maturation, parn is expelled from the complex. Interacts with rbfox2 and sympk. Mg(2+) is required as a cofactor. The cofactor is Mn(2+).

It is found in the cytoplasm. It catalyses the reaction RNA(n) + ATP = RNA(n)-3'-adenine ribonucleotide + diphosphate. Functionally, cytoplasmic poly(A) RNA polymerase that adds successive AMP monomers to the 3'-end of specific RNAs, forming a poly(A) tail. In contrast to the canonical nuclear poly(A) RNA polymerase, it only adds poly(A) to selected cytoplasmic mRNAs during oocyte maturation. Plays a central role during oocyte maturation by mediating polyadenylation of dormant mRNAs, which contain 5'AAUAAA-3' sequence in their 3'UTR. In immature oocytes, polyadenylation of poly(A) tails is counteracted by the ribonuclease parn. During maturation parn is excluded from the ribonucleoprotein complex, allowing poly(A) elongation and activation of mRNAs. May not play a role in replication-dependent histone mRNA degradation. The sequence is that of Poly(A) RNA polymerase GLD2-A (tent2-a) from Xenopus laevis (African clawed frog).